The sequence spans 329 residues: GMP reductase (329 aa).

Cysteine 178 (thioimidate intermediate) is an active-site residue. An NADP(+)-binding site is contributed by 207–230; it reads VIADGGIRTHGDIAKSIRMGATMV.

The protein belongs to the IMPDH/GMPR family. GuaC type 2 subfamily.

The enzyme catalyses IMP + NH4(+) + NADP(+) = GMP + NADPH + 2 H(+). Catalyzes the irreversible NADPH-dependent deamination of GMP to IMP. It functions in the conversion of nucleobase, nucleoside and nucleotide derivatives of G to A nucleotides, and in maintaining the intracellular balance of A and G nucleotides. This Lactococcus lactis subsp. lactis (strain IL1403) (Streptococcus lactis) protein is GMP reductase.